Here is a 1203-residue protein sequence, read N- to C-terminus: Rho GTPase-activating protein gacGG (1203 aa).

7 RCC1 repeats span residues 52-104 (TGEL…AIME), 106-148 (GLLY…VVAD), 155-204 (KRSV…AIVE), 206-255 (NEVF…ARSG), 257-298 (GNVC…VLSE), 299-359 (KGEI…EGRN), and 361-410 (LSVY…YLRG). The disordered stretch occupies residues 316 to 343 (KLDVNSSPNINSSSGTTTPTTNTTTTTK). Over residues 320-343 (NSSPNINSSSGTTTPTTNTTTTTK) the composition is skewed to low complexity. The 214-residue stretch at 381-594 (VDIAESMRRK…TIMKQYPLME (214 aa)) folds into the Rho-GAP domain. Residues 649 to 679 (TLEIKNNQNNQNNQKENNNNNNNINNSNNNN) adopt a coiled-coil conformation. Disordered stretches follow at residues 657 to 725 (NNQN…TGNI), 746 to 789 (KDGN…NLSP), and 831 to 852 (FANS…LIGS). Low complexity-rich tracts occupy residues 746–788 (KDGN…PNLS) and 833–852 (NSGS…LIGS). The stretch at 995–1078 (FDLLEKSMTE…ISNQNLSRVN (84 aa)) forms a coiled coil.

It is found in the cytoplasm. Its function is as follows. Rho GTPase-activating protein involved in the signal transduction pathway. The polypeptide is Rho GTPase-activating protein gacGG (gacGG) (Dictyostelium discoideum (Social amoeba)).